Reading from the N-terminus, the 567-residue chain is Urease subunit alpha (567 aa).

The region spanning 129–567 (GGIDSHIHFI…LPMAQRYFLF (439 aa)) is the Urease domain. Residues H134, H136, and K217 each contribute to the Ni(2+) site. At K217 the chain carries N6-carboxylysine. Substrate is bound at residue H219. H246 and H272 together coordinate Ni(2+). H320 (proton donor) is an active-site residue. D360 serves as a coordination point for Ni(2+).

The protein belongs to the metallo-dependent hydrolases superfamily. Urease alpha subunit family. As to quaternary structure, heterotrimer of UreA (gamma), UreB (beta) and UreC (alpha) subunits. Three heterotrimers associate to form the active enzyme. Ni cation serves as cofactor. Carboxylation allows a single lysine to coordinate two nickel ions.

The protein resides in the cytoplasm. The catalysed reaction is urea + 2 H2O + H(+) = hydrogencarbonate + 2 NH4(+). It participates in nitrogen metabolism; urea degradation; CO(2) and NH(3) from urea (urease route): step 1/1. This Alcanivorax borkumensis (strain ATCC 700651 / DSM 11573 / NCIMB 13689 / SK2) protein is Urease subunit alpha.